Here is a 199-residue protein sequence, read N- to C-terminus: Transgelin-2 (199 aa).

The residue at position 2 (A2) is an N-acetylalanine. S11 is modified (phosphoserine). N6-acetyllysine is present on residues K17 and K20. Residues 24-136 (ADLEQILIQW…RTLMNLGGLA (113 aa)) form the Calponin-homology (CH) domain. Position 163 is a phosphoserine (S163). K171 is covalently cross-linked (Glycyl lysine isopeptide (Lys-Gly) (interchain with G-Cter in SUMO2)). The stretch at 174–199 (IGLQMGTNRGASQAGMTGYGMPRQIL) is one Calponin-like repeat. A Phosphothreonine modification is found at T180. Omega-N-methylarginine occurs at positions 182 and 196.

It belongs to the calponin family.

In Mus musculus (Mouse), this protein is Transgelin-2 (Tagln2).